The sequence spans 345 residues: tRNA N6-adenosine threonylcarbamoyltransferase (345 aa).

Positions 111 and 115 each coordinate Fe cation. Residues 134–138, aspartate 167, glycine 180, and asparagine 276 contribute to the substrate site; that span reads LVSGG. A Fe cation-binding site is contributed by aspartate 304.

This sequence belongs to the KAE1 / TsaD family. Fe(2+) is required as a cofactor.

The protein resides in the cytoplasm. It carries out the reaction L-threonylcarbamoyladenylate + adenosine(37) in tRNA = N(6)-L-threonylcarbamoyladenosine(37) in tRNA + AMP + H(+). Required for the formation of a threonylcarbamoyl group on adenosine at position 37 (t(6)A37) in tRNAs that read codons beginning with adenine. Is involved in the transfer of the threonylcarbamoyl moiety of threonylcarbamoyl-AMP (TC-AMP) to the N6 group of A37, together with TsaE and TsaB. TsaD likely plays a direct catalytic role in this reaction. The polypeptide is tRNA N6-adenosine threonylcarbamoyltransferase (Bordetella avium (strain 197N)).